Reading from the N-terminus, the 752-residue chain is Kaurene synthase like 2, chloroplastic (752 aa).

The N-terminal 28 residues, 1–28 (MSLLLSNSALVGPKFRSSRISHASASLD), are a transit peptide targeting the chloroplast. Residues Asp-538, Asp-542, Asn-682, and Glu-690 each coordinate Mg(2+). The DDXXD motif signature appears at 538–542 (DDLFD).

The protein belongs to the terpene synthase family. Mg(2+) serves as cofactor. As to expression, highly expressed in leaves.

It is found in the plastid. The protein localises to the chloroplast. It functions in the pathway secondary metabolite biosynthesis; terpenoid biosynthesis. Involved in the biosynthesis of ent-kaurene diterpenoids natural products such as oridonin, miltiradiene, eriocalyxin B and nezukol, known to exhibit antitumor, anti-inflammatory and antibacterial activities. Catalyzes the conversion of ent-copalyl diphosphate (ent-CPP) to ent-isopimaradiene like compounds. The polypeptide is Kaurene synthase like 2, chloroplastic (Isodon rubescens (Rabdosia rubescens)).